Reading from the N-terminus, the 86-residue chain is Mu-theraphotoxin-Cg2a 3 (86 aa).

The N-terminal stretch at 1 to 21 (MKVSVVITLAVLGVMFVWASA) is a signal peptide. A propeptide spanning residues 22-50 (AELKERGSDQRDSPAWIKSMERIFQSEER) is cleaved from the precursor. Disulfide bonds link C52–C66, C59–C71, and C65–C78. Position 84 is a phenylalanine amide (F84).

It belongs to the neurotoxin 10 (Hwtx-1) family. 37 (Jztx-31) subfamily. As to expression, expressed by the venom gland.

Its subcellular location is the secreted. Its function is as follows. Inhibits both peak current and fast inactivation of voltage-gated sodium channels (Nav) channels. Inhibits the inactivation of Nav on DRG neurons (EC(50)=1.77 uM) and peak current of cardiac myocytes (IC(50)=0.90 uM). This is Mu-theraphotoxin-Cg2a 3 from Chilobrachys guangxiensis (Chinese earth tiger tarantula).